Consider the following 177-residue polypeptide: Nuclear export protein (177 aa).

Short sequence motifs (nuclear export signal) lie at residues 91–100 and 117–127; these read LWLPMKSLSL and MKHQILTRLKL.

In terms of assembly, binds M1 protein. May interact with human nucleoporins and exportin XPO1/CRM1.

The protein resides in the virion. Its subcellular location is the host nucleus. Functionally, mediates the nuclear export of encapsidated genomic RNAs (ribonucleoproteins, RNPs). Acts as an adapter between viral RNPs complexes and the nuclear export machinery of the cell. Possesses no intrinsic RNA-binding activity, but includes a C-terminal M1-binding domain. This domain is believed to allow recognition of RNPs to which the M1 protein is bound. Because the M1 protein is not available in large quantities until the later stages of infection, such an indirect recognition mechanism probably ensures that genomic RNPs are not exported from the nucleus before sufficient quantities of viral mRNA and progeny genomic RNA have been synthesized. Furthermore, the RNPs enters the cytoplasm only when they have associated with the M1 protein that is necessary to guide them to the plasma membrane. May down-regulate viral RNA synthesis when overproduced. The chain is Nuclear export protein (NS) from Influenza C virus (strain C/Great lakes/1167/1954).